A 309-amino-acid chain; its full sequence is MSIRIIPQDELGSSEKRTADMIPPLLFPRLKNLYNRRAERLRELAENNPLGDYLRFAALIAHAQEVVLYDHPLEMDLTARIKEASAQGKPPLDIHVLPRDKHWQKLLMALIAELKPEMSGPALAVIENLEKASTQELEDMASALFASDFSSVSSDKAPFIWAALSLYWAQMANLIPGKARAEYGEQRQYCPVCGSMPVSSMVQIGTTQGLRYLRCNLCETEWHVVRVKCSNCEQSGKLHYWSLDDEQAAIKAESCDDCGTYLKILYQEKEPKVEAVADDLASLVLDARMEQEGYARSSINPFLFPGEGE.

It belongs to the FdhE family.

Its subcellular location is the cytoplasm. In terms of biological role, necessary for formate dehydrogenase activity. This Escherichia coli O127:H6 (strain E2348/69 / EPEC) protein is Protein FdhE.